Reading from the N-terminus, the 188-residue chain is Accessory gene regulator protein B (188 aa).

A run of 4 helical transmembrane segments spans residues 49-69 (VALI…YFLV), 100-122 (VYFQ…LIIY), 143-163 (LLSI…PEPF), and 164-184 (KQLI…IFFP).

The protein belongs to the AgrB family.

The protein resides in the cell membrane. In terms of biological role, essential for the production of a quorum sensing system signal molecule, the autoinducing peptide (AIP). This quorum sensing system is responsible for the regulation of the expression of virulence factor genes. Involved in the proteolytic processing of AgrD, the precursor of AIP. This Staphylococcus haemolyticus (strain JCSC1435) protein is Accessory gene regulator protein B.